A 57-amino-acid polypeptide reads, in one-letter code: Small nuclear protein PRAC1 (57 aa).

Residues 38–57 form a disordered region; that stretch reads RSDGSACNSGISGGRGRKIP.

In terms of tissue distribution, highly expressed in prostate, rectum, and distal colon, and weakly expressed in bladder. Expressed in prostate cancer cell lines.

Its subcellular location is the nucleus. The protein is Small nuclear protein PRAC1 (PRAC1) of Homo sapiens (Human).